The sequence spans 311 residues: tRNA-cytidine(32) 2-sulfurtransferase (311 aa).

The PP-loop motif motif lies at 47-52 (SGGKDS). [4Fe-4S] cluster is bound by residues Cys122, Cys125, and Cys213.

It belongs to the TtcA family. Homodimer. It depends on Mg(2+) as a cofactor. [4Fe-4S] cluster serves as cofactor.

The protein resides in the cytoplasm. It carries out the reaction cytidine(32) in tRNA + S-sulfanyl-L-cysteinyl-[cysteine desulfurase] + AH2 + ATP = 2-thiocytidine(32) in tRNA + L-cysteinyl-[cysteine desulfurase] + A + AMP + diphosphate + H(+). It functions in the pathway tRNA modification. In terms of biological role, catalyzes the ATP-dependent 2-thiolation of cytidine in position 32 of tRNA, to form 2-thiocytidine (s(2)C32). The sulfur atoms are provided by the cysteine/cysteine desulfurase (IscS) system. The protein is tRNA-cytidine(32) 2-sulfurtransferase of Escherichia coli O45:K1 (strain S88 / ExPEC).